Consider the following 283-residue polypeptide: Pantothenate synthetase (283 aa).

Residue 30 to 37 participates in ATP binding; it reads MGALHEGH. His-37 acts as the Proton donor in catalysis. Gln-61 is a (R)-pantoate binding site. A beta-alanine-binding site is contributed by Gln-61. An ATP-binding site is contributed by 147 to 150; it reads GMKD. Gln-153 contributes to the (R)-pantoate binding site. ATP-binding positions include Val-176 and 184 to 187; that span reads LSSR.

It belongs to the pantothenate synthetase family. Homodimer.

The protein resides in the cytoplasm. The catalysed reaction is (R)-pantoate + beta-alanine + ATP = (R)-pantothenate + AMP + diphosphate + H(+). The protein operates within cofactor biosynthesis; (R)-pantothenate biosynthesis; (R)-pantothenate from (R)-pantoate and beta-alanine: step 1/1. In terms of biological role, catalyzes the condensation of pantoate with beta-alanine in an ATP-dependent reaction via a pantoyl-adenylate intermediate. This chain is Pantothenate synthetase, found in Endomicrobium trichonymphae.